The primary structure comprises 693 residues: Zinc finger protein 441 (693 aa).

One can recognise a KRAB domain in the interval 4–79; it reads VAFEDVAINF…ERACEIKDNS (76 aa). The segment at 169–190 adopts a C2H2-type 1 zinc-finger fold; the sequence is YDCKECASFSSLENLQRHMAAH. The C2H2-type 2; degenerate zinc finger occupies 196 to 218; the sequence is RICKLCGNAFIWPSLFHMLRRTH. The segment at 224–246 adopts a C2H2-type 3; degenerate zinc-finger fold; sequence YEYEQCSTAFPAYSSTLRHERTH. The C2H2-type 4; degenerate zinc finger occupies 252-274; the sequence is YQCKQCGKAFSCSCYTQLYERTH. C2H2-type zinc fingers lie at residues 280–302, 308–330, 336–358, 364–386, 392–413, 419–441, 447–469, 475–497, 503–525, 531–553, 559–581, 587–609, 615–637, 643–665, and 671–693; these read YECKQCGKAFYHLGSFQRHMIVH, HKCKICGKGFLSPSSVRRHKRTH, YECKYCGKAFSDCTGFRRHMITH, HKCKVCGKAFDSPSLCRRHETTH, YKCECGKAFSDFYYFRNHETTH, YKCKQCGKAFICCTYLQIHERIH, YKCKQCGKAFRSSNYIRVHEKTH, YECKQCGKALSHLKSFQRHMIMH, HKCKICGKSFDSPSSFRRHERIH, YKCKLCGKGFRSSSYIQLHERTH, YGCQQCGKALSDLSSFRRHMITH, HKCKICGKGFDYPSSVQRHERTH, YECKECGKAFSHSSYLRIHERVH, YKCKECGKPFHCPSAFHKHERTH, and YKCKECGEAFHCISSFHKHEMTH.

Belongs to the krueppel C2H2-type zinc-finger protein family.

The protein resides in the nucleus. May be involved in transcriptional regulation. This Homo sapiens (Human) protein is Zinc finger protein 441 (ZNF441).